The following is a 162-amino-acid chain: Protein archease (162 aa).

Ca(2+) is bound by residues aspartate 34, aspartate 161, and isoleucine 162.

It belongs to the archease family. In terms of assembly, component of the tRNA-splicing ligase complex.

Its function is as follows. Component of the tRNA-splicing ligase complex required to facilitate the enzymatic turnover of catalytic subunit RTCB. Together with ddx1, acts by facilitating the guanylylation of RTCB, a key intermediate step in tRNA ligation. In Ictalurus punctatus (Channel catfish), this protein is Protein archease.